A 358-amino-acid chain; its full sequence is Dynein axonemal assembly factor 10 (358 aa).

6 WD repeats span residues 64-106, 116-155, 163-206, 208-250, 258-298, and 320-358; these read EKPK…TPVY, NCID…TPVA, ETKR…VRWE, NIKN…PSKG, AHKS…QRSR, and LSTQ…LNKL.

In terms of assembly, interacts with PIH1D1; the interaction associates DNAAF10 with the R2TP complex. Interacts with several dynein axonemal assembly factors.

The protein localises to the dynein axonemal particle. Key assembly factor specifically required for the stability of axonemal dynein heavy chains in cytoplasm. The sequence is that of Dynein axonemal assembly factor 10 (dnaaf10) from Xenopus tropicalis (Western clawed frog).